Reading from the N-terminus, the 145-residue chain is Superoxide dismutase [Mn/Fe] (145 aa).

The Fe(3+) site is built by H10 and H64. Residues H10 and H64 each coordinate Mn(2+).

This sequence belongs to the iron/manganese superoxide dismutase family. The cofactor is Mn(2+). Fe(3+) serves as cofactor.

It carries out the reaction 2 superoxide + 2 H(+) = H2O2 + O2. In terms of biological role, destroys superoxide anion radicals which are normally produced within the cells and which are toxic to biological systems. Catalyzes the dismutation of superoxide anion radicals into O2 and H2O2 by successive reduction and oxidation of the transition metal ion at the active site. This chain is Superoxide dismutase [Mn/Fe] (sodA), found in Streptococcus acidominimus.